A 443-amino-acid polypeptide reads, in one-letter code: MNEIKGIERAVQVEVPRPRFLLLAFTDINGSLKGMEIPMERYEEAVEDGVSFDGSSIPGFEGIEDSDLIFKADPSTYAEIPWEGIGRVYGYIYKGDEPYQADPRGILKRVLERLEKEGLKAHIGPEPEFYIFKKNGTWELHIPDSGGYFDLVGLDKAREIRREIALYMPYLGLKPEVLHHEVGKAQHEIDFRYDEALRTADNIVSFKHVVKAVAELHGYYATFMPKPIYGFPGNGMHLHISLWKDGENVFIGEDGLSDTALHFIGGILKHAKALAALTNPTVNSYKRLVPGYEAPVYISWGYRNRSALIRVPAFKGSGARIEYRCPDPSANPYLALAGILMVGLDGIKKKVEPDSYVETNVYEMDDAERERLGIDTLPGSLGEALEELKKDKTVREALGGAYKNFIDYKEREWEEYIEYLSSRDIPIDTKKVTEWELERYFYV.

The 87-residue stretch at 11–97 folds into the GS beta-grasp domain; it reads VQVEVPRPRF…VYGYIYKGDE (87 aa). The 341-residue stretch at 103-443 folds into the GS catalytic domain; it reads PRGILKRVLE…EWELERYFYV (341 aa). Mg(2+) contacts are provided by Glu-126 and Glu-128. Residue Glu-176 participates in ATP binding. Positions 181 and 188 each coordinate Mg(2+). Residue Gly-233 coordinates L-glutamate. Residue His-237 coordinates Mg(2+). Residues 239-241 and Ser-241 each bind ATP; that span reads HIS. L-glutamate-binding residues include Arg-287, Glu-293, and Arg-305. Residues Arg-305 and Arg-310 each contribute to the ATP site. Glu-322 serves as a coordination point for Mg(2+). Arg-324 contributes to the L-glutamate binding site.

Belongs to the glutamine synthetase family. As to quaternary structure, oligomer of 12 subunits arranged in the form of two hexagons. It depends on Mg(2+) as a cofactor. The cofactor is Mn(2+).

The protein localises to the cytoplasm. The enzyme catalyses L-glutamate + NH4(+) + ATP = L-glutamine + ADP + phosphate + H(+). The catalysed reaction is hydroxylamine + L-glutamate + ATP = L-glutamine hydroxamate + ADP + phosphate. Its activity is regulated as follows. The activity of this enzyme is not controlled by adenylation. Its function is as follows. Carries out the ATP-dependent synthesis of glutamine from ammonium nitrogen and glutamate. Exhibits both L-gamma-glutamylhydroxamate synthetase and gamma-glutamyltransferase activities when using hydroxylamine as substrate; in fact, the enzyme possesses low biosynthetic activity, suggesting that the reaction is biased towards the degradation of glutamine under ammonia-rich conditions. Might play some role in ammonia assimilation under ammonia-starvation conditions. Can also use GTP instead of ATP in the synthetase reaction, but not CTP or UTP. The polypeptide is Glutamine synthetase (Thermococcus kodakarensis (strain ATCC BAA-918 / JCM 12380 / KOD1) (Pyrococcus kodakaraensis (strain KOD1))).